We begin with the raw amino-acid sequence, 24 residues long: Ascaphin-5 (24 aa).

As to expression, expressed by the skin glands.

It localises to the secreted. Antimicrobial peptide. Synthetic peptide shows higher potency against Gram-negative bacteria than against Gram-positive bacteria. Has a very week hemolytic activity. This Ascaphus truei (Coastal tailed frog) protein is Ascaphin-5.